Consider the following 403-residue polypeptide: Cytochrome P450 monooxygenase ustC (403 aa).

An N-terminal signal peptide occupies residues 1–18; it reads MSPFIFAVTLTFAILALG. N52 and N92 each carry an N-linked (GlcNAc...) asparagine glycan. C318 lines the heme pocket.

Belongs to the cytochrome P450 family. It depends on heme as a cofactor.

It participates in mycotoxin biosynthesis. Cytochrome P450 monooxygenase; part of the gene cluster that mediates the biosynthesis of the secondary metabolite ustiloxin B, an antimitotic tetrapeptide. First, ustA is processed by the subtilisin-like endoprotease Kex2 that is outside the ustiloxin B gene cluster, at the C-terminal side of Arg-Lys, after transfer to Golgi apparatus through the endoplasmic reticulum (ER). Cleavage by KEX2 generates 16 peptides YAIG-I to YAIG-XVI. To process the precursor peptide further, at least two peptidases are necessary to cleave the N-terminal and C-terminal sides of the Tyr-Ala-Ile-Gly core peptide which serves as backbone for the synthesis of ustiloxin B, through cyclization and modification of the tyrosine with a non-protein coding amino acid, norvaline. One of the two peptidases must be the serine peptidase ustP; and the other pepdidase is probably ustH. Macrocyclization of the core peptide derived from ustA requires the tyrosinase ustQ, as well as the homologous oxidases ustYa and ustYb, and leads to the production of the first cyclization product N-desmethylustiloxin F. For the formation of N-desmethylustiloxin F, three oxidation steps are required, hydroxylation at the benzylic position, hydroxylation at either the aromatic ring of Tyr or beta-position of Ile, and oxidative cyclization. UstQ may catalyze the oxidation of a phenol moiety, whereas the ustYa and ustYb are most likely responsible for the remaining two-step oxidations. N-desmethylustiloxin F is then methylated by ustM to yield ustiloxin F which in turn substrate of the cytochrome P450 monooxygenase ustC which catalyzes the formation of S-deoxyustiloxin H. The flavoprotein monooxygenases ustF1 and ustF2 then participate in the modification of the side chain of S-deoxyustiloxin H, leading to the synthesis of an oxime intermediate, via ustiloxin H. Finally, carboxylative dehydration performed by the cysteine desulfurase-like protein ustD yields ustiloxin B. The polypeptide is Cytochrome P450 monooxygenase ustC (Aspergillus flavus (strain ATCC 200026 / FGSC A1120 / IAM 13836 / NRRL 3357 / JCM 12722 / SRRC 167)).